The following is a 907-amino-acid chain: Protein translocase subunit SecA (907 aa).

ATP is bound by residues glutamine 87, glycine 105–threonine 109, and aspartate 510. The Zn(2+) site is built by cysteine 892, cysteine 894, cysteine 903, and histidine 904.

It belongs to the SecA family. As to quaternary structure, monomer and homodimer. Part of the essential Sec protein translocation apparatus which comprises SecA, SecYEG and auxiliary proteins SecDF-YajC and YidC. The cofactor is Zn(2+).

It is found in the cell inner membrane. The protein resides in the cytoplasm. It carries out the reaction ATP + H2O + cellular proteinSide 1 = ADP + phosphate + cellular proteinSide 2.. Part of the Sec protein translocase complex. Interacts with the SecYEG preprotein conducting channel. Has a central role in coupling the hydrolysis of ATP to the transfer of proteins into and across the cell membrane, serving both as a receptor for the preprotein-SecB complex and as an ATP-driven molecular motor driving the stepwise translocation of polypeptide chains across the membrane. The sequence is that of Protein translocase subunit SecA from Acinetobacter baumannii (strain ACICU).